The chain runs to 857 residues: uncharacterized protein (857 aa).

Disordered stretches follow at residues 316-339 (PPAP…TKEN), 484-561 (AKQP…PRTN), 619-777 (GQFP…PKPQ), and 809-836 (EQRP…STGK). 3 stretches are compositionally biased toward basic and acidic residues: residues 324 to 339 (PENK…TKEN), 518 to 534 (KKTE…KAEE), and 630 to 640 (QRAESSIDKDC). A compositionally biased stretch (polar residues) spans 683–700 (RTTTVQPHSHSAQPTTLR). The segment covering 708–725 (SSSLIASAKPAPPISSSS) has biased composition (low complexity). Over residues 726-738 (TGPNVTNPNQSSA) the composition is skewed to polar residues. A compositionally biased stretch (basic and acidic residues) spans 809–828 (EQRPEREAMKRQAQQERENA).

This is an uncharacterized protein from Mus musculus (Mouse).